The following is a 542-amino-acid chain: Glucose-6-phosphate isomerase (542 aa).

Catalysis depends on Glu353, which acts as the Proton donor. Residues His384 and Lys508 contribute to the active site.

The protein belongs to the GPI family.

It localises to the cytoplasm. The catalysed reaction is alpha-D-glucose 6-phosphate = beta-D-fructose 6-phosphate. It participates in carbohydrate biosynthesis; gluconeogenesis. It functions in the pathway carbohydrate degradation; glycolysis; D-glyceraldehyde 3-phosphate and glycerone phosphate from D-glucose: step 2/4. Its function is as follows. Catalyzes the reversible isomerization of glucose-6-phosphate to fructose-6-phosphate. In Corynebacterium efficiens (strain DSM 44549 / YS-314 / AJ 12310 / JCM 11189 / NBRC 100395), this protein is Glucose-6-phosphate isomerase.